Reading from the N-terminus, the 234-residue chain is Zinc finger FYVE domain-containing protein 21 (234 aa).

An FYVE-type zinc finger spans residues 44-104 (DKECPRCMQC…QCADCALVSH (61 aa)). 8 residues coordinate Zn(2+): cysteine 50, cysteine 53, cysteine 66, cysteine 69, cysteine 74, cysteine 77, cysteine 96, and cysteine 99. The interval 107-234 (AEFYDKQLKV…TKLLYESRDQ (128 aa)) is PH-like.

Interacts with PTK2/FAK1.

It is found in the cell junction. The protein localises to the focal adhesion. It localises to the cytoplasmic vesicle. The protein resides in the endosome. Its function is as follows. Plays a role in cell adhesion, and thereby in cell motility which requires repeated formation and disassembly of focal adhesions. Regulates microtubule-induced PTK2/FAK1 dephosphorylation, an event important for focal adhesion disassembly, as well as integrin beta-1/ITGB1 cell surface expression. The protein is Zinc finger FYVE domain-containing protein 21 (Zfyve21) of Rattus norvegicus (Rat).